Reading from the N-terminus, the 78-residue chain is Large ribosomal subunit protein uL29 (78 aa).

Positions 59–78 (VESERKRGKSLSSTQTQKEE) are disordered. A compositionally biased stretch (polar residues) spans 68 to 78 (SLSSTQTQKEE).

This sequence belongs to the universal ribosomal protein uL29 family.

In Synechococcus sp. (strain JA-3-3Ab) (Cyanobacteria bacterium Yellowstone A-Prime), this protein is Large ribosomal subunit protein uL29.